Reading from the N-terminus, the 295-residue chain is Indole-3-glycerol phosphate synthase (295 aa).

It belongs to the TrpC family.

The catalysed reaction is 1-(2-carboxyphenylamino)-1-deoxy-D-ribulose 5-phosphate + H(+) = (1S,2R)-1-C-(indol-3-yl)glycerol 3-phosphate + CO2 + H2O. It participates in amino-acid biosynthesis; L-tryptophan biosynthesis; L-tryptophan from chorismate: step 4/5. This is Indole-3-glycerol phosphate synthase from Prochlorococcus marinus (strain AS9601).